The chain runs to 657 residues: Probable potassium transport system protein Kup (657 aa).

12 helical membrane-spanning segments follow: residues 14 to 34, 47 to 67, 96 to 116, 140 to 160, 166 to 186, 201 to 221, 242 to 262, 283 to 303, 340 to 360, 371 to 391, 396 to 416, and 425 to 445; these read IGGLLITLGIIYGDIGTSPLY, ADIVLGGISCVFWTLTLQTTI, IQWLIVPAIIGGSALLADGII, TIVYIVITILFILFTIQQFGT, FFAPMMLIWFAMLGTLGFIQI, AYHLLSVHPDGFFVLGFVFLC, ISWIFVKTTLVLNYFGQAAYL, LIMPHWFLPFGIVVATLAAVI, LYIPSINWLLFFGCVGIVLHF, GLAIILCMIMTTILLNYYLIM, LYFMVPLITIYLLIEFSFLIA, and GYVTLIIAILLISIMTIWYLA.

Belongs to the HAK/KUP transporter (TC 2.A.72) family.

The protein resides in the cell inner membrane. It carries out the reaction K(+)(in) + H(+)(in) = K(+)(out) + H(+)(out). In terms of biological role, transport of potassium into the cell. Likely operates as a K(+):H(+) symporter. This Flavobacterium johnsoniae (strain ATCC 17061 / DSM 2064 / JCM 8514 / BCRC 14874 / CCUG 350202 / NBRC 14942 / NCIMB 11054 / UW101) (Cytophaga johnsonae) protein is Probable potassium transport system protein Kup.